The primary structure comprises 446 residues: MNAQEANFDGLVGPTHNYAGLSFGNVASLNNEKSAANPKAAAKQGLRKMKQLADLGFAQGVLPPQERPSLRLLRELGFSGKDADVIAKAAKQAPELLAAASSASAMWTANAATVSPSADTSDGRVHFTPANLCSKLHRAIEHEATRRTLSTLFADPTHFAVHEALTGTPALGDEGAANHTRFCAEYGKPGIEFFVYGRAEYRRGPEPKRFPARQTFEASRAVAHRHGLAEEATVYAQQDPDVIDAGVFHNDVISVGNRDTLFTHERAFVNKQAIYDTLTAALDARGARLNVIEVPDAAVSVNDAVTSYLFNSQLLSRADGSQVLVVPQECRENARVAAYLDQLAAGNGPIHDVLVFDLRESMKNGGGPACLRLRVVLNDAERAAVTSNVWINDTLFASLDAWIDKHYRDRLAPEDLADPALLDESRTALDELTQILRVGSLYDFQR.

Substrate-binding positions include 19 to 28, Asn-110, and 137 to 138; these read AGLSFGNVAS and HR. Glu-174 is an active-site residue. Substrate is bound at residue Arg-213. His-249 is a catalytic residue. Asp-251 and Asn-364 together coordinate substrate. Cys-370 serves as the catalytic Nucleophile.

It belongs to the succinylarginine dihydrolase family. Homodimer.

It carries out the reaction N(2)-succinyl-L-arginine + 2 H2O + 2 H(+) = N(2)-succinyl-L-ornithine + 2 NH4(+) + CO2. It functions in the pathway amino-acid degradation; L-arginine degradation via AST pathway; L-glutamate and succinate from L-arginine: step 2/5. Catalyzes the hydrolysis of N(2)-succinylarginine into N(2)-succinylornithine, ammonia and CO(2). This chain is N-succinylarginine dihydrolase, found in Burkholderia cenocepacia (strain HI2424).